The following is a 223-amino-acid chain: DNA mismatch repair protein MutH (223 aa).

It belongs to the MutH family.

It is found in the cytoplasm. Its function is as follows. Sequence-specific endonuclease that cleaves unmethylated GATC sequences. It is involved in DNA mismatch repair. This Haemophilus influenzae (strain 86-028NP) protein is DNA mismatch repair protein MutH.